A 148-amino-acid chain; its full sequence is Large ribosomal subunit protein uL15B (148 aa).

2 stretches are compositionally biased toward basic residues: residues 1 to 13 (MPTH…KLRG) and 21 to 31 (RIGKHRKHPGG). The disordered stretch occupies residues 1–38 (MPTHTSKTRKLRGHVSAGHGRIGKHRKHPGGRGKAGGL). Y108 carries the phosphotyrosine modification.

The protein belongs to the universal ribosomal protein uL15 family. As to quaternary structure, component of the large ribosomal subunit (LSU). Mature yeast ribosomes consist of a small (40S) and a large (60S) subunit. The 40S small subunit contains 1 molecule of ribosomal RNA (18S rRNA) and at least 33 different proteins. The large 60S subunit contains 3 rRNA molecules (25S, 5.8S and 5S rRNA) and at least 46 different proteins.

The protein resides in the cytoplasm. It is found in the nucleus. Its subcellular location is the nucleolus. Functionally, component of the ribosome, a large ribonucleoprotein complex responsible for the synthesis of proteins in the cell. The small ribosomal subunit (SSU) binds messenger RNAs (mRNAs) and translates the encoded message by selecting cognate aminoacyl-transfer RNA (tRNA) molecules. The large subunit (LSU) contains the ribosomal catalytic site termed the peptidyl transferase center (PTC), which catalyzes the formation of peptide bonds, thereby polymerizing the amino acids delivered by tRNAs into a polypeptide chain. The nascent polypeptides leave the ribosome through a tunnel in the LSU and interact with protein factors that function in enzymatic processing, targeting, and the membrane insertion of nascent chains at the exit of the ribosomal tunnel. The polypeptide is Large ribosomal subunit protein uL15B (rpl2801) (Schizosaccharomyces pombe (strain 972 / ATCC 24843) (Fission yeast)).